We begin with the raw amino-acid sequence, 485 residues long: Inosine-5'-monophosphate dehydrogenase (485 aa).

2 CBS domains span residues 95–154 (VITN…IDDV) and 155–215 (MTKE…AKDS). Residues Asp249 and 299-301 (GIG) contribute to the NAD(+) site. K(+) contacts are provided by Gly301 and Gly303. Ser304 is a binding site for IMP. Cys306 serves as a coordination point for K(+). Cys306 serves as the catalytic Thioimidate intermediate. IMP contacts are provided by residues 339 to 341 (DGG), 362 to 363 (GS), and 386 to 390 (YRGMG). The active-site Proton acceptor is Arg402. Glu414 contributes to the IMP binding site. Positions 468, 469, and 470 each coordinate K(+).

This sequence belongs to the IMPDH/GMPR family. Homotetramer. It depends on K(+) as a cofactor.

It carries out the reaction IMP + NAD(+) + H2O = XMP + NADH + H(+). It functions in the pathway purine metabolism; XMP biosynthesis via de novo pathway; XMP from IMP: step 1/1. Its activity is regulated as follows. Mycophenolic acid (MPA) is a non-competitive inhibitor that prevents formation of the closed enzyme conformation by binding to the same site as the amobile flap. In contrast, mizoribine monophosphate (MZP) is a competitive inhibitor that induces the closed conformation. MPA is a potent inhibitor of mammalian IMPDHs but a poor inhibitor of the bacterial enzymes. MZP is a more potent inhibitor of bacterial IMPDH. Catalyzes the conversion of inosine 5'-phosphate (IMP) to xanthosine 5'-phosphate (XMP), the first committed and rate-limiting step in the de novo synthesis of guanine nucleotides, and therefore plays an important role in the regulation of cell growth. The polypeptide is Inosine-5'-monophosphate dehydrogenase (Halalkalibacterium halodurans (strain ATCC BAA-125 / DSM 18197 / FERM 7344 / JCM 9153 / C-125) (Bacillus halodurans)).